The primary structure comprises 762 residues: Anhydrosialidase (762 aa).

Residues 1 to 27 (MGRIGKKAMAIALVSAVMVTPLNVCAT) form the signal peptide. Arg293 serves as a coordination point for substrate. The Proton acceptor role is filled by Asp318. 3 BNR repeats span residues 328 to 339 (AKSTDGGNTWSE), 511 to 522 (RYSDDEGASWSD), and 571 to 582 (MYSDDHGDNWTY). The active site involves Glu595. Arg611 lines the substrate pocket. The stretch at 620–631 (VTSIDGGETWSD) is one BNR 4 repeat. Substrate is bound at residue Arg673. The active-site Nucleophile is Tyr713.

The protein belongs to the glycosyl hydrolase 33 family.

The protein localises to the secreted. Its subcellular location is the extracellular space. The catalysed reaction is Elimination of alpha-sialyl groups in N-acetylneuraminic acid glycosides, releasing 2,7-anhydro-alpha-N-acetylneuraminate.. The sequence is that of Anhydrosialidase from Macrobdella decora (North American leech).